Reading from the N-terminus, the 226-residue chain is MTVLVVTGTDTGVGKTVATAALACHARRAGIDVAVCKPVQTGTDDGDDDLAEVARLSGVTELAGLARYPRPLAPVAAAAAAGMALPSREQLLRFIGELDRPGRLTLVEGAGGLLVELGENGVTARDLAVALGAAVLVVVRPALGTLNHTALTLEALAAQGLSCAGLVIGAWPEHPGPVETSNRPALEALAPVRAVLPAGAAALAAAEFEAVSAGAFDRDWVTALAG.

12–17 contributes to the ATP binding site; the sequence is GVGKTV. Residue Thr-16 participates in Mg(2+) binding. The active site involves Lys-37. Thr-41 serves as a coordination point for substrate. ATP is bound by residues Asp-49, 108–111, and 197–199; these read EGAG and PAG. Positions 49 and 108 each coordinate Mg(2+).

This sequence belongs to the dethiobiotin synthetase family. In terms of assembly, homodimer. Mg(2+) is required as a cofactor.

It is found in the cytoplasm. The enzyme catalyses (7R,8S)-7,8-diammoniononanoate + CO2 + ATP = (4R,5S)-dethiobiotin + ADP + phosphate + 3 H(+). It functions in the pathway cofactor biosynthesis; biotin biosynthesis; biotin from 7,8-diaminononanoate: step 1/2. In terms of biological role, catalyzes a mechanistically unusual reaction, the ATP-dependent insertion of CO2 between the N7 and N8 nitrogen atoms of 7,8-diaminopelargonic acid (DAPA, also called 7,8-diammoniononanoate) to form a ureido ring. The polypeptide is ATP-dependent dethiobiotin synthetase BioD (Mycobacterium avium (strain 104)).